The following is a 279-amino-acid chain: Bifunctional protein FolD (279 aa).

Residues 162–164 (GRS), serine 187, and isoleucine 228 each bind NADP(+).

This sequence belongs to the tetrahydrofolate dehydrogenase/cyclohydrolase family. Homodimer.

The catalysed reaction is (6R)-5,10-methylene-5,6,7,8-tetrahydrofolate + NADP(+) = (6R)-5,10-methenyltetrahydrofolate + NADPH. The enzyme catalyses (6R)-5,10-methenyltetrahydrofolate + H2O = (6R)-10-formyltetrahydrofolate + H(+). The protein operates within one-carbon metabolism; tetrahydrofolate interconversion. Catalyzes the oxidation of 5,10-methylenetetrahydrofolate to 5,10-methenyltetrahydrofolate and then the hydrolysis of 5,10-methenyltetrahydrofolate to 10-formyltetrahydrofolate. This Acidiphilium cryptum (strain JF-5) protein is Bifunctional protein FolD.